The primary structure comprises 808 residues: Bifunctional uridylyltransferase/uridylyl-removing enzyme (808 aa).

The uridylyltransferase stretch occupies residues 1–315; sequence MEAESPCAAS…ALVRRPKRRP (315 aa). Residues 316–609 form a uridylyl-removing region; that stretch reads LDEGVVEYAG…EISPRDGERI (294 aa). The HD domain occupies 430–544; sequence VDRHVVETAV…LEVLHALSEA (115 aa). ACT domains lie at 610–686 and 730–805; these read DAVI…GMLQ and ILEV…VDEP.

The protein belongs to the GlnD family. Mg(2+) is required as a cofactor.

It carries out the reaction [protein-PII]-L-tyrosine + UTP = [protein-PII]-uridylyl-L-tyrosine + diphosphate. The catalysed reaction is [protein-PII]-uridylyl-L-tyrosine + H2O = [protein-PII]-L-tyrosine + UMP + H(+). Modifies, by uridylylation and deuridylylation, the PII regulatory protein (GlnB), in response to the nitrogen status of the cell that GlnD senses through the glutamine level. Under low glutamine levels, catalyzes the conversion of the PII protein and UTP to PII-UMP and PPi, while under higher glutamine levels, GlnD hydrolyzes PII-UMP to PII and UMP (deuridylylation). Thus, controls uridylylation state and activity of the PII protein, and plays an important role in the regulation of nitrogen assimilation and metabolism. The protein is Bifunctional uridylyltransferase/uridylyl-removing enzyme of Mycobacterium tuberculosis (strain CDC 1551 / Oshkosh).